The primary structure comprises 1223 residues: DNA-directed RNA polymerase subunit beta'' (1223 aa).

Zn(2+) is bound by residues Cys233, Cys307, Cys314, and Cys317.

The protein belongs to the RNA polymerase beta' chain family. RpoC2 subfamily. As to quaternary structure, in plastids the minimal PEP RNA polymerase catalytic core is composed of four subunits: alpha, beta, beta', and beta''. When a (nuclear-encoded) sigma factor is associated with the core the holoenzyme is formed, which can initiate transcription. The cofactor is Zn(2+).

Its subcellular location is the plastid. The protein resides in the chloroplast. The catalysed reaction is RNA(n) + a ribonucleoside 5'-triphosphate = RNA(n+1) + diphosphate. Its function is as follows. DNA-dependent RNA polymerase catalyzes the transcription of DNA into RNA using the four ribonucleoside triphosphates as substrates. In Mesostigma viride (Green alga), this protein is DNA-directed RNA polymerase subunit beta''.